We begin with the raw amino-acid sequence, 243 residues long: 1-(5-phosphoribosyl)-5-[(5-phosphoribosylamino)methylideneamino] imidazole-4-carboxamide isomerase (243 aa).

Residue Asp-8 is the Proton acceptor of the active site. The active-site Proton donor is the Asp-130.

Belongs to the HisA/HisF family.

It is found in the cytoplasm. It catalyses the reaction 1-(5-phospho-beta-D-ribosyl)-5-[(5-phospho-beta-D-ribosylamino)methylideneamino]imidazole-4-carboxamide = 5-[(5-phospho-1-deoxy-D-ribulos-1-ylimino)methylamino]-1-(5-phospho-beta-D-ribosyl)imidazole-4-carboxamide. It participates in amino-acid biosynthesis; L-histidine biosynthesis; L-histidine from 5-phospho-alpha-D-ribose 1-diphosphate: step 4/9. In Vesicomyosocius okutanii subsp. Calyptogena okutanii (strain HA), this protein is 1-(5-phosphoribosyl)-5-[(5-phosphoribosylamino)methylideneamino] imidazole-4-carboxamide isomerase.